Reading from the N-terminus, the 732-residue chain is Protein kinase YpkA (732 aa).

Positions 136-408 (VAETDKFAEG…SNEARLHEFL (273 aa)) constitute a Protein kinase domain. ATP contacts are provided by residues 142–150 (FAEGESHIS) and Lys163. Asp270 functions as the Proton acceptor in the catalytic mechanism.

It belongs to the protein kinase superfamily. Ser/Thr protein kinase family.

Its subcellular location is the secreted. The catalysed reaction is L-seryl-[protein] + ATP = O-phospho-L-seryl-[protein] + ADP + H(+). It carries out the reaction L-threonyl-[protein] + ATP = O-phospho-L-threonyl-[protein] + ADP + H(+). Its function is as follows. Acts as a virulence determinant. This chain is Protein kinase YpkA (ypkA), found in Yersinia pestis.